The primary structure comprises 58 residues: Large ribosomal subunit protein bL32 (58 aa).

Belongs to the bacterial ribosomal protein bL32 family.

This Caldicellulosiruptor bescii (strain ATCC BAA-1888 / DSM 6725 / KCTC 15123 / Z-1320) (Anaerocellum thermophilum) protein is Large ribosomal subunit protein bL32.